The following is a 169-amino-acid chain: X polypeptide (169 aa).

It belongs to the IagB/IpgF/P19 family.

The sequence is that of X polypeptide (X) from Escherichia coli.